The chain runs to 126 residues: Histone H2B 1.2 (126 aa).

Residues 1–12 (MPEPAKSAPAPK) are compositionally biased toward low complexity. The tract at residues 1–35 (MPEPAKSAPAPKKGSKKAVTKTPKKDGKKRRKSRK) is disordered. 2 positions are modified to N6-acetyllysine: lysine 6 and lysine 13. Phosphoserine is present on serine 15. N6-acetyllysine is present on residues lysine 16 and lysine 21. Residue serine 113 is glycosylated (O-linked (GlcNAc) serine). Lysine 121 participates in a covalent cross-link: Glycyl lysine isopeptide (Lys-Gly) (interchain with G-Cter in ubiquitin).

The protein belongs to the histone H2B family. In terms of assembly, the nucleosome is a histone octamer containing two molecules each of H2A, H2B, H3 and H4 assembled in one H3-H4 heterotetramer and two H2A-H2B heterodimers. The octamer wraps approximately 147 bp of DNA. Monoubiquitination of Lys-121 by BRE1 gives a specific tag for epigenetic transcriptional activation and is also prerequisite for histone H3 'Lys-4' and 'Lys-79' methylation. Post-translationally, phosphorylated on Ser-15 during developmentally programmed apoptosis; which may facilitate apoptotic chromatin condensation. In terms of processing, glcNAcylation at Ser-113 promotes monoubiquitination of Lys-121. It fluctuates in response to extracellular glucose, and associates with transcribed genes.

It localises to the nucleus. The protein resides in the chromosome. Functionally, core component of nucleosome. Nucleosomes wrap and compact DNA into chromatin, limiting DNA accessibility to the cellular machineries which require DNA as a template. Histones thereby play a central role in transcription regulation, DNA repair, DNA replication and chromosomal stability. DNA accessibility is regulated via a complex set of post-translational modifications of histones, also called histone code, and nucleosome remodeling. The protein is Histone H2B 1.2 of Xenopus laevis (African clawed frog).